A 555-amino-acid chain; its full sequence is Oxamate carbamoyltransferase subunit AllF (555 aa).

It belongs to the AllF family. The OXTCase is composed of 3 subunits, AllF, AllG and AllH. Requires Mg(2+) as cofactor.

The catalysed reaction is oxamate + carbamoyl phosphate = N-carbamoyl-2-oxoglycine + phosphate. It functions in the pathway nitrogen metabolism; (S)-allantoin degradation. In terms of biological role, component of a carbamoyltransferase involved in the anaerobic nitrogen utilization via the assimilation of allantoin. Catalyzes the conversion of oxalurate (N-carbamoyl-2-oxoglycine) to oxamate and carbamoyl phosphate. The sequence is that of Oxamate carbamoyltransferase subunit AllF from Escherichia coli (strain K12).